A 186-amino-acid polypeptide reads, in one-letter code: Ribosome-recycling factor (186 aa).

This sequence belongs to the RRF family.

Its subcellular location is the cytoplasm. Responsible for the release of ribosomes from messenger RNA at the termination of protein biosynthesis. May increase the efficiency of translation by recycling ribosomes from one round of translation to another. The chain is Ribosome-recycling factor from Prosthecochloris aestuarii (strain DSM 271 / SK 413).